A 1073-amino-acid polypeptide reads, in one-letter code: Transmembrane protein 132E (1073 aa).

A signal peptide spans 1–33 (MGHFVVQGDLPWILCSLRLVIMIIAGKVSPTSS). The Extracellular portion of the chain corresponds to 34 to 899 (DALFSVPVPS…MTDLEIGMYA (866 aa)). N-linked (GlcNAc...) asparagine glycosylation is present at Asn-102. The interval 246–270 (DPDSNDECGESYPRRGGPSRGESLS) is disordered. N-linked (GlcNAc...) asparagine glycans are attached at residues Asn-324, Asn-396, and Asn-746. A helical membrane pass occupies residues 900-920 (LLGVFCLAILVFLINCIVFVL). The Cytoplasmic portion of the chain corresponds to 921 to 1073 (KYRHKRIPPE…DYMRRIKEIA (153 aa)). The segment covering 952-970 (TQSDLSPQTVESPSNTLEG) has biased composition (polar residues). Positions 952–1024 (TQSDLSPQTV…PTSKRKRVKF (73 aa)) are disordered. A compositionally biased stretch (low complexity) spans 982 to 994 (SGSSQTSVQSQVH).

It belongs to the TMEM132 family.

The protein resides in the membrane. In terms of biological role, required for normal inner ear hair cell function and hearing. The polypeptide is Transmembrane protein 132E (tmem132e) (Danio rerio (Zebrafish)).